A 121-amino-acid chain; its full sequence is Small ribosomal subunit protein bS6 (121 aa).

The protein belongs to the bacterial ribosomal protein bS6 family.

In terms of biological role, binds together with bS18 to 16S ribosomal RNA. In Rickettsia canadensis (strain McKiel), this protein is Small ribosomal subunit protein bS6.